We begin with the raw amino-acid sequence, 47 residues long: Defensin-like protein 1 (47 aa).

4 disulfide bridges follow: Cys-3–Cys-47, Cys-14–Cys-34, Cys-20–Cys-41, and Cys-24–Cys-43.

Monomer and homodimer.

Functionally, inhibits trypsin but not chymotrypsin. This Vigna unguiculata (Cowpea) protein is Defensin-like protein 1.